A 152-amino-acid chain; its full sequence is Endoribonuclease YbeY (152 aa).

The Zn(2+) site is built by His-101, His-105, and His-111. The disordered stretch occupies residues 132–152; that stretch reads PSSLIERTTKPAKKAAKRKKR. The span at 141-152 shows a compositional bias: basic residues; the sequence is KPAKKAAKRKKR.

The protein belongs to the endoribonuclease YbeY family. It depends on Zn(2+) as a cofactor.

It is found in the cytoplasm. In terms of biological role, single strand-specific metallo-endoribonuclease involved in late-stage 70S ribosome quality control and in maturation of the 3' terminus of the 16S rRNA. The chain is Endoribonuclease YbeY from Koribacter versatilis (strain Ellin345).